Here is a 497-residue protein sequence, read N- to C-terminus: Cytochrome P450 76AD1 (497 aa).

A helical membrane pass occupies residues 4 to 24; the sequence is ATLAMILAIWFISFHFIKLLF. Residue C439 coordinates heme.

This sequence belongs to the cytochrome P450 family. The cofactor is heme.

The protein resides in the membrane. The protein operates within pigment biosynthesis; betalain biosynthesis. Its function is as follows. Converts L-DOPA to cyclo-DOPA in the betalain pathway. Provides the cyclo-DOPA moiety of all red betacyanins. This is Cytochrome P450 76AD1 from Beta vulgaris (Sugar beet).